The following is a 480-amino-acid chain: Glutamate--tRNA ligase (480 aa).

The 'HIGH' region motif lies at 21–31 (PSPTGYLHVGG). Residues C110, C112, C137, and H139 each contribute to the Zn(2+) site. The 'KMSKS' region signature appears at 248-252 (KLSKR). An ATP-binding site is contributed by K251.

Belongs to the class-I aminoacyl-tRNA synthetase family. Glutamate--tRNA ligase type 1 subfamily. Monomer. Requires Zn(2+) as cofactor.

The protein localises to the cytoplasm. It carries out the reaction tRNA(Glu) + L-glutamate + ATP = L-glutamyl-tRNA(Glu) + AMP + diphosphate. Its function is as follows. Catalyzes the attachment of glutamate to tRNA(Glu) in a two-step reaction: glutamate is first activated by ATP to form Glu-AMP and then transferred to the acceptor end of tRNA(Glu). In Haemophilus influenzae (strain 86-028NP), this protein is Glutamate--tRNA ligase.